The sequence spans 228 residues: tRNA (guanine-N(1)-)-methyltransferase (228 aa).

Residues Gly-111 and 131–136 each bind S-adenosyl-L-methionine; that span reads IGDFIL.

It belongs to the RNA methyltransferase TrmD family. In terms of assembly, homodimer.

It is found in the cytoplasm. The enzyme catalyses guanosine(37) in tRNA + S-adenosyl-L-methionine = N(1)-methylguanosine(37) in tRNA + S-adenosyl-L-homocysteine + H(+). In terms of biological role, specifically methylates guanosine-37 in various tRNAs. This Pelagibacter ubique (strain HTCC1062) protein is tRNA (guanine-N(1)-)-methyltransferase.